The following is a 310-amino-acid chain: Olfactory receptor 5P53 (310 aa).

The Extracellular portion of the chain corresponds to 1–25 (MEAENHTTVAELIILGLTEDPKLCI). An N-linked (GlcNAc...) asparagine glycan is attached at N5. Residues 26–46 (VFFVIFLGVYIVTLVGNISII) traverse the membrane as a helical segment. At 47 to 54 (TLIRISSQ) the chain is on the cytoplasmic side. A helical transmembrane segment spans residues 55–75 (LHTPMYLFLSHLAFVDILYST). Residues 76–99 (SVSVIMHMELLGHGLALPVAACAA) lie on the Extracellular side of the membrane. C97 and C189 form a disulfide bridge. A helical transmembrane segment spans residues 100–120 (QLCITVSFGSAECFLLAAMAY). Residues 121–133 (DRYVAICSPLLYS) are Cytoplasmic-facing. Residues 134 to 154 (TLMSPRVCFLLLGMSYVGGCM) traverse the membrane as a helical segment. Over 155-196 (NGWTFTGCLLSLSFCGPNQIDHFFCDFSPLLKLSCSDVSIIG) the chain is Extracellular. Residues 197–217 (IIPSISSGSIIVVTVFVIAVS) traverse the membrane as a helical segment. Over 218–237 (YIYILITILNMRSTEGRHKA) the chain is Cytoplasmic. The helical transmembrane segment at 238–258 (FSTCTSHLTAVTLYYGTITFI) threads the bilayer. The Extracellular segment spans residues 259–271 (YVMPKSNYSTEQN). A glycan (N-linked (GlcNAc...) asparagine) is linked at N265. A helical transmembrane segment spans residues 272–292 (KVLSVFYTVVIPMLNPLIYSL). Over 293–310 (RNRDVKEALRKATVRVYS) the chain is Cytoplasmic.

It belongs to the G-protein coupled receptor 1 family.

Its subcellular location is the cell membrane. Potential odorant receptor. The protein is Olfactory receptor 5P53 of Mus musculus (Mouse).